We begin with the raw amino-acid sequence, 886 residues long: Phosphatidylinositol 3-kinase catalytic subunit type 3 (886 aa).

Residues 35-184 (YKAVLEDPML…LAKLTKAHRQ (150 aa)) form the C2 PI3K-type domain. In terms of domain architecture, PIK helical spans 283–519 (DHDLKPNAAT…PKTHEMYLNV (237 aa)). The segment at 414-464 (GLEPTKKDSQGPMLESMTTSGINPETDSSQILSNPLPAVSSPAPPSKTKDG) is disordered. Residues 429–444 (SMTTSGINPETDSSQI) show a composition bias toward polar residues. Low complexity predominate over residues 445-454 (LSNPLPAVSS). The PI3K/PI4K catalytic domain occupies 604–870 (IPEKATLFKS…LIDDSVNALF (267 aa)). The G-loop stretch occupies residues 610 to 616 (LFKSALM). The tract at residues 739 to 747 (GVGDRHLDN) is catalytic loop. The activation loop stretch occupies residues 758–779 (HIDFGYILGRDPKPLPPPMKLN).

It belongs to the PI3/PI4-kinase family. Component of the PI3K (PI3KC3/PI3K-III/class III phosphatidylinositol 3-kinase) complex the core of which is composed of the catalytic subunit pik3c3, the regulatory subunit pik3r4 and becn1 associating with additional regulatory/auxiliary subunits to form alternative complex forms. Requires Mn(2+) as cofactor.

Its subcellular location is the midbody. It catalyses the reaction a 1,2-diacyl-sn-glycero-3-phospho-(1D-myo-inositol) + ATP = a 1,2-diacyl-sn-glycero-3-phospho-(1D-myo-inositol-3-phosphate) + ADP + H(+). Catalytic subunit of the PI3K complex that mediates formation of phosphatidylinositol 3-phosphate; different complex forms are believed to play a role in multiple membrane trafficking pathways. Involved in the transport of lysosomal enzyme precursors to lysosomes. Required for transport from early to late endosomes. This is Phosphatidylinositol 3-kinase catalytic subunit type 3 (pik3c3) from Xenopus laevis (African clawed frog).